We begin with the raw amino-acid sequence, 217 residues long: Ribonuclease HII (217 aa).

Residues 26 to 215 form the RNase H type-2 domain; the sequence is EIVCGVDEAG…VREALDLMAG (190 aa). A divalent metal cation-binding residues include Asp32, Glu33, and Asp124.

Belongs to the RNase HII family. Mn(2+) is required as a cofactor. Requires Mg(2+) as cofactor.

It is found in the cytoplasm. It carries out the reaction Endonucleolytic cleavage to 5'-phosphomonoester.. Endonuclease that specifically degrades the RNA of RNA-DNA hybrids. The chain is Ribonuclease HII from Burkholderia ambifaria (strain ATCC BAA-244 / DSM 16087 / CCUG 44356 / LMG 19182 / AMMD) (Burkholderia cepacia (strain AMMD)).